The primary structure comprises 186 residues: Peptidyl-tRNA hydrolase (186 aa).

TRNA is bound at residue Y14. Catalysis depends on H19, which acts as the Proton acceptor. Residues F65, N67, and N113 each contribute to the tRNA site.

Belongs to the PTH family. As to quaternary structure, monomer.

The protein localises to the cytoplasm. It carries out the reaction an N-acyl-L-alpha-aminoacyl-tRNA + H2O = an N-acyl-L-amino acid + a tRNA + H(+). In terms of biological role, hydrolyzes ribosome-free peptidyl-tRNAs (with 1 or more amino acids incorporated), which drop off the ribosome during protein synthesis, or as a result of ribosome stalling. Functionally, catalyzes the release of premature peptidyl moieties from peptidyl-tRNA molecules trapped in stalled 50S ribosomal subunits, and thus maintains levels of free tRNAs and 50S ribosomes. The protein is Peptidyl-tRNA hydrolase of Limosilactobacillus reuteri (strain DSM 20016) (Lactobacillus reuteri).